The following is a 766-amino-acid chain: Oligopeptide transporter 7 (766 aa).

The segment at 1–58 (MEESEQVLPLLTNPKDLTNPSYASSSSSSSEPRDETEDLLLPISDENEEEEEENSPIR) is disordered. Acidic residues predominate over residues 45-54 (DENEEEEEEN). Helical transmembrane passes span 79–99 (MWVL…FFWY), 104–124 (LTIS…LMAA), 154–174 (ITIF…VTVV), 184–204 (FFVS…WAGI), 247–267 (FVIA…LFQI), 287–307 (IGSG…STIS), 324–344 (VGVG…WLDV), 390–410 (LCTF…ATIM), 446–466 (VPEW…IFAC), 477–497 (WWGV…IGII), 509–529 (IITE…NMCF), 561–581 (FMAQ…TAWW), 627–647 (LYKS…LVWL), 676–696 (ATAV…FVVF), and 709–729 (VLSG…YMCL).

Belongs to the oligopeptide OPT transporter (TC 2.A.67.1) family. Expressed in the major and the first-order veins and in the hydathodes of the leaves. In the roots, expressed in circular zones surrounding lateral root primordia and in some part of the root epidermis. Expressed also in the sepals and the cortical tissues of the stem, but not in the conducting bundles, the petals or the reproductive tissues.

The protein localises to the membrane. Its function is as follows. Involved in the translocation of tetra- and pentapeptides across the cellular membrane in an energy-dependent manner. May also transport cadmium complexes. The polypeptide is Oligopeptide transporter 7 (OPT7) (Arabidopsis thaliana (Mouse-ear cress)).